The primary structure comprises 1234 residues: DNA-directed RNA polymerase subunit beta (1234 aa).

It belongs to the RNA polymerase beta chain family. As to quaternary structure, the RNAP catalytic core consists of 2 alpha, 1 beta, 1 beta' and 1 omega subunit. When a sigma factor is associated with the core the holoenzyme is formed, which can initiate transcription.

It carries out the reaction RNA(n) + a ribonucleoside 5'-triphosphate = RNA(n+1) + diphosphate. In terms of biological role, DNA-dependent RNA polymerase catalyzes the transcription of DNA into RNA using the four ribonucleoside triphosphates as substrates. The protein is DNA-directed RNA polymerase subunit beta of Clostridium perfringens (strain SM101 / Type A).